Consider the following 691-residue polypeptide: DNA ligase (691 aa).

Residues 36-40 (DAEYD), 85-86 (SL), and Glu-118 contribute to the NAD(+) site. The N6-AMP-lysine intermediate role is filled by Lys-120. NAD(+) contacts are provided by Arg-141, Glu-178, Lys-295, and Lys-319. Zn(2+) is bound by residues Cys-413, Cys-416, Cys-431, and Cys-437. Residues 595 to 684 (GRPQPLAGQT…ESASSEDAQP (90 aa)) form the BRCT domain.

This sequence belongs to the NAD-dependent DNA ligase family. LigA subfamily. Mg(2+) is required as a cofactor. Requires Mn(2+) as cofactor.

It carries out the reaction NAD(+) + (deoxyribonucleotide)n-3'-hydroxyl + 5'-phospho-(deoxyribonucleotide)m = (deoxyribonucleotide)n+m + AMP + beta-nicotinamide D-nucleotide.. Its function is as follows. DNA ligase that catalyzes the formation of phosphodiester linkages between 5'-phosphoryl and 3'-hydroxyl groups in double-stranded DNA using NAD as a coenzyme and as the energy source for the reaction. It is essential for DNA replication and repair of damaged DNA. This is DNA ligase from Chromohalobacter salexigens (strain ATCC BAA-138 / DSM 3043 / CIP 106854 / NCIMB 13768 / 1H11).